The sequence spans 145 residues: Class I hydrophobin rodE (145 aa).

Disulfide bonds link cysteine 43/cysteine 126, cysteine 59/cysteine 120, cysteine 60/cysteine 95, and cysteine 127/cysteine 140.

The protein belongs to the fungal hydrophobin family. In terms of assembly, self-assembles to form functional amyloid fibrils called rodlets. Self-assembly into fibrillar rodlets occurs spontaneously at hydrophobic:hydrophilic interfaces and the rodlets further associate laterally to form amphipathic monolayers.

In terms of biological role, aerial growth, conidiation, and dispersal of filamentous fungi in the environment rely upon a capability of their secreting small amphipathic proteins called hydrophobins (HPBs) with low sequence identity. Class I can self-assemble into an outermost layer of rodlet bundles on aerial cell surfaces, conferring cellular hydrophobicity that supports fungal growth, development and dispersal; whereas Class II form highly ordered films at water-air interfaces through intermolecular interactions but contribute nothing to the rodlet structure. RodE is a class I hydrophobin that, unlike rodA, is not required for rodlet formation. The protein is Class I hydrophobin rodE of Aspergillus fumigatus (strain ATCC MYA-4609 / CBS 101355 / FGSC A1100 / Af293) (Neosartorya fumigata).